The following is a 381-amino-acid chain: tRNA pseudouridine synthase D (381 aa).

D81 serves as the catalytic Nucleophile. Residues 160–335 (GMPNYFGSQR…TLGSRRFFWV (176 aa)) form the TRUD domain.

It belongs to the pseudouridine synthase TruD family.

It carries out the reaction uridine(13) in tRNA = pseudouridine(13) in tRNA. In terms of biological role, responsible for synthesis of pseudouridine from uracil-13 in transfer RNAs. The polypeptide is tRNA pseudouridine synthase D (Helicobacter pylori (strain J99 / ATCC 700824) (Campylobacter pylori J99)).